Here is a 502-residue protein sequence, read N- to C-terminus: Cytochrome P450 81D1 (502 aa).

The helical transmembrane segment at 6–26 (IRVVLYSIFSLIFLIISFKFL) threads the bilayer. Cys440 contributes to the heme binding site.

It belongs to the cytochrome P450 family. Requires heme as cofactor.

The protein localises to the membrane. The protein is Cytochrome P450 81D1 (CYP81D1) of Arabidopsis thaliana (Mouse-ear cress).